The primary structure comprises 199 residues: 7-methyl-GTP pyrophosphatase (199 aa).

The active-site Proton acceptor is the D74.

This sequence belongs to the Maf family. YceF subfamily. A divalent metal cation serves as cofactor.

Its subcellular location is the cytoplasm. It catalyses the reaction N(7)-methyl-GTP + H2O = N(7)-methyl-GMP + diphosphate + H(+). Functionally, nucleoside triphosphate pyrophosphatase that hydrolyzes 7-methyl-GTP (m(7)GTP). May have a dual role in cell division arrest and in preventing the incorporation of modified nucleotides into cellular nucleic acids. The protein is 7-methyl-GTP pyrophosphatase of Cupriavidus pinatubonensis (strain JMP 134 / LMG 1197) (Cupriavidus necator (strain JMP 134)).